A 189-amino-acid polypeptide reads, in one-letter code: UPF0301 protein RF_0044 (189 aa).

This sequence belongs to the UPF0301 (AlgH) family.

In Rickettsia felis (strain ATCC VR-1525 / URRWXCal2) (Rickettsia azadi), this protein is UPF0301 protein RF_0044.